Reading from the N-terminus, the 485-residue chain is Aspartyl/glutamyl-tRNA(Asn/Gln) amidotransferase subunit B (485 aa).

It belongs to the GatB/GatE family. GatB subfamily. Heterotrimer of A, B and C subunits.

It catalyses the reaction L-glutamyl-tRNA(Gln) + L-glutamine + ATP + H2O = L-glutaminyl-tRNA(Gln) + L-glutamate + ADP + phosphate + H(+). The enzyme catalyses L-aspartyl-tRNA(Asn) + L-glutamine + ATP + H2O = L-asparaginyl-tRNA(Asn) + L-glutamate + ADP + phosphate + 2 H(+). Its function is as follows. Allows the formation of correctly charged Asn-tRNA(Asn) or Gln-tRNA(Gln) through the transamidation of misacylated Asp-tRNA(Asn) or Glu-tRNA(Gln) in organisms which lack either or both of asparaginyl-tRNA or glutaminyl-tRNA synthetases. The reaction takes place in the presence of glutamine and ATP through an activated phospho-Asp-tRNA(Asn) or phospho-Glu-tRNA(Gln). The protein is Aspartyl/glutamyl-tRNA(Asn/Gln) amidotransferase subunit B of Bordetella avium (strain 197N).